We begin with the raw amino-acid sequence, 139 residues long: D-ribose pyranase (139 aa).

Residue H20 is the Proton donor of the active site. Substrate contacts are provided by residues D28, H106, and 128 to 130 (YAN).

It belongs to the RbsD / FucU family. RbsD subfamily. As to quaternary structure, homodecamer.

It is found in the cytoplasm. It catalyses the reaction beta-D-ribopyranose = beta-D-ribofuranose. The protein operates within carbohydrate metabolism; D-ribose degradation; D-ribose 5-phosphate from beta-D-ribopyranose: step 1/2. In terms of biological role, catalyzes the interconversion of beta-pyran and beta-furan forms of D-ribose. The sequence is that of D-ribose pyranase from Aliivibrio fischeri (strain MJ11) (Vibrio fischeri).